We begin with the raw amino-acid sequence, 296 residues long: 4-hydroxy-tetrahydrodipicolinate synthase (296 aa).

Pyruvate is bound at residue T49. Y137 serves as the catalytic Proton donor/acceptor. The active-site Schiff-base intermediate with substrate is the K165. Pyruvate is bound at residue I207.

It belongs to the DapA family. As to quaternary structure, homotetramer; dimer of dimers.

The protein resides in the cytoplasm. It catalyses the reaction L-aspartate 4-semialdehyde + pyruvate = (2S,4S)-4-hydroxy-2,3,4,5-tetrahydrodipicolinate + H2O + H(+). The protein operates within amino-acid biosynthesis; L-lysine biosynthesis via DAP pathway; (S)-tetrahydrodipicolinate from L-aspartate: step 3/4. Catalyzes the condensation of (S)-aspartate-beta-semialdehyde [(S)-ASA] and pyruvate to 4-hydroxy-tetrahydrodipicolinate (HTPA). The protein is 4-hydroxy-tetrahydrodipicolinate synthase of Rhodopseudomonas palustris (strain BisA53).